A 1388-amino-acid chain; its full sequence is Rho-associated protein kinase 2 (1388 aa).

The segment at M1–A24 is disordered. Residues Y92–F354 enclose the Protein kinase domain. ATP contacts are provided by residues I98–V106 and K121. The active-site Proton acceptor is D214. One can recognise an AGC-kinase C-terminal domain in the interval D357–S425. The tract at residues N363–V784 is interaction with PPP1R12A. Residues P373–L420 are interaction with NPM1. T414 carries the post-translational modification Phosphothreonine; by ROCK2. Coiled-coil stretches lie at residues N439 to L1025 and D1053 to D1131. The region spanning T497–T573 is the REM-1 domain. Positions N512–E530 are enriched in basic and acidic residues. The tract at residues N512–D532 is disordered. Position 722 is a phosphotyrosine; by SRC (Y722). A RhoBD domain is found at T979 to P1047. Residues T979–P1047 form an RHOA binding region. The residue at position 1137 (S1137) is a Phosphoserine. Residues E1150–P1349 enclose the PH domain. Residue T1212 is modified to Phosphothreonine. The Phorbol-ester/DAG-type zinc-finger motif lies at G1260 to C1315. The interval V1345–S1388 is disordered. Phosphoserine is present on residues S1362 and S1374. The span at S1362–R1376 shows a compositional bias: polar residues.

The protein belongs to the protein kinase superfamily. AGC Ser/Thr protein kinase family. In terms of assembly, homodimer. Interacts with IRS1. Interacts with RAF1. Interacts with RHOA (activated by GTP). Interacts with RHOB and RHOC. Interacts with PPP1R12A. Interacts with EP300. Interacts with CHORDC1. Interacts with BRCA2. Interacts with NPM1; this interaction enhances ROCK2 activity. Interacts with SORL1. Interacts with PJVK. It depends on Mg(2+) as a cofactor. Autophosphorylated. Phosphorylation at Tyr-722 reduces its binding to RHOA and is crucial for focal adhesion dynamics. Dephosphorylation by PTPN11 stimulates its RHOA binding activity. In terms of processing, cleaved by granzyme B during apoptosis. This leads to constitutive activation of the kinase and membrane blebbing. In terms of tissue distribution, highly expressed in whole brain and in cerebellum, and at lower levels in heart and lung. Detected at low levels in skeletal muscle, spleen, liver, kidney and pancreas.

The protein resides in the cytoplasm. Its subcellular location is the cell membrane. The protein localises to the nucleus. It is found in the cytoskeleton. It localises to the microtubule organizing center. The protein resides in the centrosome. It carries out the reaction L-seryl-[protein] + ATP = O-phospho-L-seryl-[protein] + ADP + H(+). The catalysed reaction is L-threonyl-[protein] + ATP = O-phospho-L-threonyl-[protein] + ADP + H(+). With respect to regulation, activated by RHOA binding. Inhibited by Y-27632. Protein kinase which is a key regulator of actin cytoskeleton and cell polarity. Involved in regulation of smooth muscle contraction, actin cytoskeleton organization, stress fiber and focal adhesion formation, neurite retraction, cell adhesion and motility via phosphorylation of ADD1, BRCA2, CNN1, EZR, DPYSL2, EP300, MSN, MYL9/MLC2, NPM1, RDX, PPP1R12A and VIM. Phosphorylates SORL1 and IRF4. Acts as a negative regulator of VEGF-induced angiogenic endothelial cell activation. Positively regulates the activation of p42/MAPK1-p44/MAPK3 and of p90RSK/RPS6KA1 during myogenic differentiation. Plays an important role in the timely initiation of centrosome duplication. Inhibits keratinocyte terminal differentiation. May regulate closure of the eyelids and ventral body wall through organization of actomyosin bundles. Plays a critical role in the regulation of spine and synaptic properties in the hippocampus. Plays an important role in generating the circadian rhythm of the aortic myofilament Ca(2+) sensitivity and vascular contractility by modulating the myosin light chain phosphorylation. The protein is Rho-associated protein kinase 2 (ROCK2) of Bos taurus (Bovine).